A 373-amino-acid chain; its full sequence is MIALHFGAGNIGRGFIGALLHHSGYDVVFADVNETMVSLLNEKKEYTVELAEEGRSSEIIGPVSAINSGSQTEELYRLMNEAALITTAVGPNVLKLIAPSIAEGLRRRNTANTLNIIACENMIGGSSFLKKEIYSHLTEAEQKSVSETVGFPNSAVDRIVPIQHHEDPLKVSVEPFFEWVIDESGFKGKTPVINGALFVDDLTPYIERKLFTVNTGHAVTAYVGYQRGLKTVKEAIDHPEIRRVVHSALLETGDYLVKSYGFKQTEHEQYIKKIIGRFENPFISDDVTRVARSPLRKLGENDRLVGPAKKIKEPNALAEGIAAALRFDFTGDPEAVELQALIEEKGYSGVLQEVCGIQSHEPLHAIILKKLNQ.

3–14 (ALHFGAGNIGRG) contacts NAD(+).

It belongs to the mannitol dehydrogenase family.

It catalyses the reaction D-mannitol 1-phosphate + NAD(+) = beta-D-fructose 6-phosphate + NADH + H(+). This Bacillus subtilis (strain 168) protein is Mannitol-1-phosphate 5-dehydrogenase (mtlD).